A 311-amino-acid chain; its full sequence is Tyrosine recombinase XerD (311 aa).

Residues 1–83 (MEFIAQFLEM…TIKSYYAFLI (83 aa)) form the Core-binding (CB) domain. One can recognise a Tyr recombinase domain in the interval 104–299 (KLPIILSIDQ…HTNHLKKALL (196 aa)). Active-site residues include R145, K176, H251, R254, and H277. The active-site O-(3'-phospho-DNA)-tyrosine intermediate is the Y286.

Belongs to the 'phage' integrase family. XerD subfamily. Forms a cyclic heterotetrameric complex composed of two molecules of XerC and two molecules of XerD.

The protein localises to the cytoplasm. Functionally, site-specific tyrosine recombinase, which acts by catalyzing the cutting and rejoining of the recombining DNA molecules. The XerC-XerD complex is essential to convert dimers of the bacterial chromosome into monomers to permit their segregation at cell division. It also contributes to the segregational stability of plasmids. This Rickettsia prowazekii (strain Madrid E) protein is Tyrosine recombinase XerD.